A 183-amino-acid polypeptide reads, in one-letter code: Shikimate kinase (183 aa).

14 to 19 lines the ATP pocket; the sequence is GAGKTT. Mg(2+) is bound at residue threonine 18. Substrate contacts are provided by aspartate 36, arginine 60, and glycine 82. An ATP-binding site is contributed by arginine 120. Arginine 139 provides a ligand contact to substrate. An ATP-binding site is contributed by glutamine 156.

Belongs to the shikimate kinase family. As to quaternary structure, monomer. Mg(2+) serves as cofactor.

It localises to the cytoplasm. It carries out the reaction shikimate + ATP = 3-phosphoshikimate + ADP + H(+). Its pathway is metabolic intermediate biosynthesis; chorismate biosynthesis; chorismate from D-erythrose 4-phosphate and phosphoenolpyruvate: step 5/7. In terms of biological role, catalyzes the specific phosphorylation of the 3-hydroxyl group of shikimic acid using ATP as a cosubstrate. The chain is Shikimate kinase from Thiobacillus denitrificans (strain ATCC 25259 / T1).